A 305-amino-acid polypeptide reads, in one-letter code: tRNA pseudouridine synthase B (305 aa).

The Nucleophile role is filled by aspartate 39.

The protein belongs to the pseudouridine synthase TruB family. Type 1 subfamily.

It carries out the reaction uridine(55) in tRNA = pseudouridine(55) in tRNA. In terms of biological role, responsible for synthesis of pseudouridine from uracil-55 in the psi GC loop of transfer RNAs. This chain is tRNA pseudouridine synthase B, found in Staphylococcus saprophyticus subsp. saprophyticus (strain ATCC 15305 / DSM 20229 / NCIMB 8711 / NCTC 7292 / S-41).